Consider the following 969-residue polypeptide: Alanine--tRNA ligase (969 aa).

A mitochondrion-targeting transit peptide spans 1–8; sequence MIKTLLRR. Zn(2+) is bound by residues His616, His620, Cys735, and His739.

It belongs to the class-II aminoacyl-tRNA synthetase family. As to quaternary structure, monomer. Zn(2+) serves as cofactor.

The protein localises to the mitochondrion. It is found in the cytoplasm. The enzyme catalyses tRNA(Ala) + L-alanine + ATP = L-alanyl-tRNA(Ala) + AMP + diphosphate. In terms of biological role, catalyzes the attachment of alanine to tRNA(Ala) in a two-step reaction: alanine is first activated by ATP to form Ala-AMP and then transferred to the acceptor end of tRNA(Ala). Also edits incorrectly charged tRNA(Ala) via its editing domain. This Candida albicans (strain SC5314 / ATCC MYA-2876) (Yeast) protein is Alanine--tRNA ligase.